Reading from the N-terminus, the 118-residue chain is Large ribosomal subunit protein bL20 (118 aa).

Belongs to the bacterial ribosomal protein bL20 family.

Its function is as follows. Binds directly to 23S ribosomal RNA and is necessary for the in vitro assembly process of the 50S ribosomal subunit. It is not involved in the protein synthesizing functions of that subunit. The sequence is that of Large ribosomal subunit protein bL20 from Buchnera aphidicola subsp. Acyrthosiphon pisum (strain 5A).